The following is a 508-amino-acid chain: Kinesin light chain (508 aa).

Residues 34–129 (IAEVQKDNEK…KKHLEFMASV (96 aa)) adopt a coiled-coil conformation. The segment at 156-175 (DEENEDRHNMSPTPPSQFAN) is disordered. Phosphothreonine is present on Thr-168. TPR repeat units follow at residues 186-219 (LRTL…LERT), 228-261 (ATML…RGKT), 270-303 (AATL…REKV), 312-345 (AKQL…YESK), 354-387 (AKTK…AHER), and 437-470 (TTTL…KKEA). Position 477 is a phosphothreonine (Thr-477). Phosphoserine is present on residues Ser-480 and Ser-485. Positions 484-508 (TSNEKRRSKAIKEDLDFSEEKNAKP) are disordered. The span at 493-508 (AIKEDLDFSEEKNAKP) shows a compositional bias: basic and acidic residues.

Belongs to the kinesin light chain family. As to quaternary structure, oligomeric complex composed of two heavy chains and two light chains. Ubiquitous.

The protein resides in the cytoplasm. Its subcellular location is the cytoskeleton. Its function is as follows. Kinesin is a microtubule-associated force-producing protein that may play a role in organelle transport. The light chain may function in coupling of cargo to the heavy chain or in the modulation of its ATPase activity. This Drosophila melanogaster (Fruit fly) protein is Kinesin light chain (Klc).